The chain runs to 246 residues: Ubiquinone biosynthesis O-methyltransferase (246 aa).

S-adenosyl-L-methionine is bound by residues Arg36, Gly60, Asp81, and Leu123.

Belongs to the methyltransferase superfamily. UbiG/COQ3 family.

It carries out the reaction a 3-demethylubiquinol + S-adenosyl-L-methionine = a ubiquinol + S-adenosyl-L-homocysteine + H(+). It catalyses the reaction a 3-(all-trans-polyprenyl)benzene-1,2-diol + S-adenosyl-L-methionine = a 2-methoxy-6-(all-trans-polyprenyl)phenol + S-adenosyl-L-homocysteine + H(+). Its pathway is cofactor biosynthesis; ubiquinone biosynthesis. Its function is as follows. O-methyltransferase that catalyzes the 2 O-methylation steps in the ubiquinone biosynthetic pathway. This is Ubiquinone biosynthesis O-methyltransferase from Rickettsia typhi (strain ATCC VR-144 / Wilmington).